Consider the following 282-residue polypeptide: Lipoyl synthase (282 aa).

7 residues coordinate [4Fe-4S] cluster: cysteine 37, cysteine 42, cysteine 48, cysteine 63, cysteine 67, cysteine 70, and serine 275. The Radical SAM core domain occupies 49-264 (WSRGTATFMI…RLVGIEKGFR (216 aa)).

The protein belongs to the radical SAM superfamily. Lipoyl synthase family. It depends on [4Fe-4S] cluster as a cofactor.

The protein resides in the cytoplasm. The catalysed reaction is [[Fe-S] cluster scaffold protein carrying a second [4Fe-4S](2+) cluster] + N(6)-octanoyl-L-lysyl-[protein] + 2 oxidized [2Fe-2S]-[ferredoxin] + 2 S-adenosyl-L-methionine + 4 H(+) = [[Fe-S] cluster scaffold protein] + N(6)-[(R)-dihydrolipoyl]-L-lysyl-[protein] + 4 Fe(3+) + 2 hydrogen sulfide + 2 5'-deoxyadenosine + 2 L-methionine + 2 reduced [2Fe-2S]-[ferredoxin]. The protein operates within protein modification; protein lipoylation via endogenous pathway; protein N(6)-(lipoyl)lysine from octanoyl-[acyl-carrier-protein]: step 2/2. In terms of biological role, catalyzes the radical-mediated insertion of two sulfur atoms into the C-6 and C-8 positions of the octanoyl moiety bound to the lipoyl domains of lipoate-dependent enzymes, thereby converting the octanoylated domains into lipoylated derivatives. In Porphyromonas gingivalis (strain ATCC 33277 / DSM 20709 / CIP 103683 / JCM 12257 / NCTC 11834 / 2561), this protein is Lipoyl synthase.